A 437-amino-acid chain; its full sequence is MNIPFNSVSKIQWRNPSPVSDTSCLVCGDPHGKRHYGAMSCNGCKGFFRRSIWEKRTYKCSFNNECIIEFKYRNRCRACRLKRCLHVGMDANAVRSERTRKIKTEIDGDVKLEIKEEPADSEDADDECPLDIKPDIAMAWQTKEIIAHMLYEEDRVLNWEEPYNKLRYYTMDSEVLQAIKDPSQVCARTKINWNSHSRPLITIEALRFNWCRTFTLTIDWFETLPEYRALIDDDKELLVKFSLMPVGWLWYAYKSYEYRCDGIVFVDGSWFPRDKTIQQQVCPTCVLYYGRITESFMADVVNSMKELEMDETEMVLLKAICHLQPDYRLTRRGNDVISTGREKYKRALCEYIRMKSNGFMDASFRLCKLMQILPVVDILGKYEDESALLVSLGETEFNGSGGGLPYDIHASDSHFARKNRRKSDNQYHQQHVPLHIQ.

Positions 21 to 96 (DTSCLVCGDP…VGMDANAVRS (76 aa)) form a DNA-binding region, nuclear receptor. 2 NR C4-type zinc fingers span residues 24–44 (CLVCGDPHGKRHYGAMSCNGC) and 60–79 (CSFNNECIIEFKYRNRCRAC). The region spanning 141–409 (QTKEIIAHML…SGGGLPYDIH (269 aa)) is the NR LBD domain.

Belongs to the nuclear hormone receptor family.

It localises to the nucleus. Orphan nuclear receptor. The protein is Nuclear hormone receptor family member nhr-100 (nhr-100) of Caenorhabditis elegans.